Reading from the N-terminus, the 284-residue chain is AA14 family lytic polysaccharide monooxygenase B (284 aa).

The signal sequence occupies residues 1–20 (MGYLSKLVTSVVFAIPLASA). N-linked (GlcNAc...) asparagine glycosylation is found at N42, N96, N142, and N183. A disulfide bridge links C197 with C218.

The protein belongs to the polysaccharide monooxygenase AA14 family. Requires Cu(2+) as cofactor.

It localises to the secreted. Lytic polysaccharide monooxygenase (LPMO) that plays decomposes some specific network structures formed between cellulose and hemicellulose in the plant cell walls. Catalysis by LPMOs requires the reduction of the active-site copper from Cu(II) to Cu(I) by a reducing agent and H(2)O(2) or O(2) as a cosubstrate. This Talaromyces rugulosus (Penicillium rugulosum) protein is AA14 family lytic polysaccharide monooxygenase B.